Consider the following 352-residue polypeptide: Probable protein kinase DDB_G0291842 (352 aa).

The segment at 1-57 is disordered; it reads MRPLPDQSAFEDKSELVSKKQKNEDENNENRSPETPRTPKVCPKTPTKTPLRTPTKN. The segment covering 10-34 has biased composition (basic and acidic residues); the sequence is FEDKSELVSKKQKNEDENNENRSPE. Over residues 38 to 56 the composition is skewed to low complexity; the sequence is TPKVCPKTPTKTPLRTPTK. Positions 77–331 constitute a Protein kinase domain; sequence FEYINQIGEG…IQSLLKYDKL (255 aa). ATP is bound by residues 83 to 91 and Lys-106; that span reads IGEGSFAKV. The active-site Proton acceptor is Asp-207. Asn-212 and Asp-225 together coordinate Mg(2+).

It belongs to the protein kinase superfamily. Ser/Thr protein kinase family. WEE1 subfamily.

It carries out the reaction L-seryl-[protein] + ATP = O-phospho-L-seryl-[protein] + ADP + H(+). It catalyses the reaction L-threonyl-[protein] + ATP = O-phospho-L-threonyl-[protein] + ADP + H(+). In Dictyostelium discoideum (Social amoeba), this protein is Probable protein kinase DDB_G0291842.